Here is a 102-residue protein sequence, read N- to C-terminus: Protamine-2 (102 aa).

The interval 1–102 is disordered; it reads MVRYRVRSPS…RTRRRTCRKH (102 aa). Serine 8, serine 10, and serine 37 each carry phosphoserine. Residues 39–48 are compositionally biased toward basic and acidic residues; it reads EHVEVYERTH. Over residues 49–102 the composition is skewed to basic residues; sequence GHSHYRRRHCSRRRLRRIHRQQHRSCRRRKRRSCRHRRRHRRGCRTRRRTCRKH.

This sequence belongs to the protamine P2 family. As to quaternary structure, interacts with TDRP. In terms of processing, proteolytic processing into mature chains is required for histone eviction during spermatogenesis. Transition proteins (TNP1 and TNP2) are required for processing. Testis.

The protein resides in the nucleus. It is found in the chromosome. In terms of biological role, protamines substitute for histones in the chromatin of sperm during the haploid phase of spermatogenesis. They compact sperm DNA into a highly condensed, stable and inactive complex. This is Protamine-2 (PRM2) from Pan paniscus (Pygmy chimpanzee).